Here is a 144-residue protein sequence, read N- to C-terminus: Transcriptional regulator SlyA (144 aa).

Residues 2–135 (ESSLGSDLAR…LNNIIAKLER (134 aa)) form the HTH marR-type domain. Positions 49–72 (QIQLAKAIGIEQPSLVRTLDQLES) form a DNA-binding region, H-T-H motif.

Belongs to the SlyA family. As to quaternary structure, homodimer.

Transcription regulator that can specifically activate or repress expression of target genes. This Blochmanniella floridana protein is Transcriptional regulator SlyA.